Reading from the N-terminus, the 565-residue chain is DNA-dependent metalloprotease SPRTN (565 aa).

The region spanning 23 to 130 (RALFLEFNDT…RTGANISVYH (108 aa)) is the SprT-like domain. His-88 is a Zn(2+) binding site. Glu-89 is a catalytic residue. Zn(2+) contacts are provided by His-92 and His-107. The disordered stretch occupies residues 191 to 219 (EPENYPQKRKRKNDPTISEVNSSSHVKGK). The span at 205–215 (PTISEVNSSSH) shows a compositional bias: polar residues. The SHP-box signature appears at 231–239 (FSGTGYKLF). The PIP-box motif lies at 288–295 (STPAQSIL). The tract at residues 349–389 (TLPSPSIQSTSQKPQKDISFGFTLPSQSFPSTSPGSNSENK) is disordered. Polar residues-rich tracts occupy residues 351–361 (PSPSIQSTSQK) and 372–386 (LPSQSFPSTSPGSNS). The UBZ4-type 1 zinc-finger motif lies at 436 to 463 (KVSCPVCGTEVLECKINDHLDTCTSSGP). Residues Cys-439, Cys-442, His-454, and Cys-458 each coordinate Zn(2+). The Nuclear localization signal signature appears at 476–499 (QSFPSTSQGSNSAIKEPLYKKLQI). The UBZ4-type 2 zinc-finger motif lies at 537–564 (KVCCPVCGTDVLQDKINDHLDTCLQNCN). Residues Cys-540, Cys-543, His-555, and Cys-559 each contribute to the Zn(2+) site.

It belongs to the Spartan family. Homodimer. The cofactor is Zn(2+). Autocatalytically cleaved in response to double-stranded DNA-binding: autocatalytic cleavage takes place in trans and leads to inactivation.

Its subcellular location is the nucleus. The protein resides in the chromosome. DNA-binding activates the protease activity: single-stranded DNA-binding specifically activates ability to cleave covalent DNA-protein cross-links (DPCs). In contrast, double-stranded DNA-binding specifically activates autocatalytic cleavage, and subsequent inactivation. In terms of biological role, DNA-dependent metalloendopeptidase that mediates the proteolytic cleavage of covalent DNA-protein cross-links (DPCs) during DNA synthesis, thereby playing a key role in maintaining genomic integrity. DPCs are highly toxic DNA lesions that interfere with essential chromatin transactions, such as replication and transcription, and which are induced by reactive agents, such as UV light or formaldehyde. Associates with the DNA replication machinery and specifically removes DPCs during DNA synthesis. Catalyzes proteolytic cleavage of the hmces DNA-protein cross-link following unfolding by the brip1/fancj helicase. Acts as a pleiotropic protease for DNA-binding proteins cross-linked with DNA, such as top1, top2a, histones H3 and H4. Mediates degradation of DPCs that are not ubiquitinated, while it is not able to degrade ubiquitinated DPCs. SPRTN activation requires polymerase collision with DPCs followed by helicase bypass of DPCs. May also act as a 'reader' of ubiquitinated pcna: facilitates chromatin association of rad18 and is required for efficient pcna monoubiquitination, promoting a feed-forward loop to enhance pcna ubiquitination and translesion DNA synthesis. Acts as a regulator of translesion DNA synthesis by recruiting vcp/p97 to sites of DNA damage. This chain is DNA-dependent metalloprotease SPRTN, found in Xenopus laevis (African clawed frog).